Here is a 370-residue protein sequence, read N- to C-terminus: DnaJ homolog subfamily B member 12 (370 aa).

M1 carries the post-translational modification N-acetylmethionine. The tract at residues 51-92 is disordered; that stretch reads NQKPQPAGDQPQPTEATHTTHRKAAGANTASANGEAGGESTK. The J domain maps to 110 to 174; sequence DYYEILGVSR…EKRKQYDQFG (65 aa). H185 carries the post-translational modification Pros-methylhistidine. The chain crosses the membrane as a helical span at residues 242 to 262; that stretch reads GGLGVFVQLMPILILILVSAL.

The protein belongs to the DnaJ family. DNAJB12/DNAJB14 subfamily. In terms of assembly, homodimer and homotetramer. Interacts (via J domain) with HSPA8/Hsc70. Forms a multiprotein complex, at least composed of DNAJB12, DNAJB14, HSPA8/Hsc70 and SGTA; interaction with DNAJB14 and HSPA8/Hsc70 is direct. Post-translationally, methylated at His-185 by METTL9.

Its subcellular location is the endoplasmic reticulum membrane. It localises to the nucleus membrane. Acts as a co-chaperone with HSPA8/Hsc70; required to promote protein folding and trafficking, prevent aggregation of client proteins, and promote unfolded proteins to endoplasmic reticulum-associated degradation (ERAD) pathway. Acts by determining HSPA8/Hsc70's ATPase and polypeptide-binding activities. Can also act independently of HSPA8/Hsc70: together with DNAJB14, acts as a chaperone that promotes maturation of potassium channels KCND2 and KCNH2 by stabilizing nascent channel subunits and assembling them into tetramers. While stabilization of nascent channel proteins is dependent on HSPA8/Hsc70, the process of oligomerization of channel subunits is independent of HSPA8/Hsc70. When overexpressed, forms membranous structures together with DNAJB14 and HSPA8/Hsc70 within the nucleus; the role of these structures, named DJANGOs, is still unclear. The polypeptide is DnaJ homolog subfamily B member 12 (DNAJB12) (Bos taurus (Bovine)).